We begin with the raw amino-acid sequence, 279 residues long: Dermonecrotic toxin LrSicTox-alphaIA1i (279 aa).

His11 is an active-site residue. Positions 31 and 33 each coordinate Mg(2+). His47 acts as the Nucleophile in catalysis. 2 cysteine pairs are disulfide-bonded: Cys51–Cys57 and Cys53–Cys196. Residue Asp91 coordinates Mg(2+). N-linked (GlcNAc...) asparagine glycosylation is present at Asn256.

This sequence belongs to the arthropod phospholipase D family. Class II subfamily. The cofactor is Mg(2+). As to expression, expressed by the venom gland.

It localises to the secreted. It catalyses the reaction an N-(acyl)-sphingosylphosphocholine = an N-(acyl)-sphingosyl-1,3-cyclic phosphate + choline. The catalysed reaction is an N-(acyl)-sphingosylphosphoethanolamine = an N-(acyl)-sphingosyl-1,3-cyclic phosphate + ethanolamine. It carries out the reaction a 1-acyl-sn-glycero-3-phosphocholine = a 1-acyl-sn-glycero-2,3-cyclic phosphate + choline. The enzyme catalyses a 1-acyl-sn-glycero-3-phosphoethanolamine = a 1-acyl-sn-glycero-2,3-cyclic phosphate + ethanolamine. Its activity is regulated as follows. Inhibited with low affinity by edelfosine. Its function is as follows. Dermonecrotic toxins cleave the phosphodiester linkage between the phosphate and headgroup of certain phospholipids (sphingolipid and lysolipid substrates), forming an alcohol (often choline) and a cyclic phosphate. This toxin acts on sphingomyelin (SM). It also acts on a broad range of lysophospholipids, like lysophosphatidylinositol (LPI), lysophosphatidylglycerol (LPG), lysophosphatidylethanolamine (LPE), lysobisphosphatidic acid (LBPA), lysophosphatidylserine (LPS) and lysophosphatidylcholines (LPC) of varying chain lengths. The substrate preference is LPI &gt; LPG &gt; LPS &gt; LPC &gt;&gt; LPE, LBPA. Furthermore, the enzyme also act on cyclic phosphatidic acid and lyso-platelet activating factor (LPAF, an alkyl-LPC). The enzyme does not act on sphingosylphosphorylcholine (SPC, also known as lyso-sphingomyelin) and PAF. The toxin may also act on ceramide phosphoethanolamine (CPE). It acts by transphosphatidylation, releasing exclusively cyclic phosphate products as second products. It does not exhibit detectable PLA1/2 activity. It induces dose-dependent hemolysis and dermonecrosis. Also induces increased vascular permeability, edema, inflammatory response, and platelet aggregation. The sequence is that of Dermonecrotic toxin LrSicTox-alphaIA1i from Loxosceles reclusa (Brown recluse spider).